The sequence spans 371 residues: Queuine tRNA-ribosyltransferase (371 aa).

D90 serves as the catalytic Proton acceptor. Substrate is bound by residues 90-94 (DSGGF), D144, Q188, and G215. An RNA binding region spans residues 246 to 252 (GVGTPED). D265 functions as the Nucleophile in the catalytic mechanism. The tract at residues 270-274 (TRNAR) is RNA binding; important for wobble base 34 recognition. Zn(2+) is bound by residues C303, C305, C308, and H334.

This sequence belongs to the queuine tRNA-ribosyltransferase family. As to quaternary structure, homodimer. Within each dimer, one monomer is responsible for RNA recognition and catalysis, while the other monomer binds to the replacement base PreQ1. It depends on Zn(2+) as a cofactor.

The catalysed reaction is 7-aminomethyl-7-carbaguanine + guanosine(34) in tRNA = 7-aminomethyl-7-carbaguanosine(34) in tRNA + guanine. It functions in the pathway tRNA modification; tRNA-queuosine biosynthesis. Its function is as follows. Catalyzes the base-exchange of a guanine (G) residue with the queuine precursor 7-aminomethyl-7-deazaguanine (PreQ1) at position 34 (anticodon wobble position) in tRNAs with GU(N) anticodons (tRNA-Asp, -Asn, -His and -Tyr). Catalysis occurs through a double-displacement mechanism. The nucleophile active site attacks the C1' of nucleotide 34 to detach the guanine base from the RNA, forming a covalent enzyme-RNA intermediate. The proton acceptor active site deprotonates the incoming PreQ1, allowing a nucleophilic attack on the C1' of the ribose to form the product. After dissociation, two additional enzymatic reactions on the tRNA convert PreQ1 to queuine (Q), resulting in the hypermodified nucleoside queuosine (7-(((4,5-cis-dihydroxy-2-cyclopenten-1-yl)amino)methyl)-7-deazaguanosine). The polypeptide is Queuine tRNA-ribosyltransferase (Neisseria meningitidis serogroup C (strain 053442)).